We begin with the raw amino-acid sequence, 124 residues long: Flagellar transcriptional regulator FlhD (124 aa).

It belongs to the FlhD family. As to quaternary structure, homodimer; disulfide-linked. Forms a heterohexamer composed of two FlhC and four FlhD subunits. Each FlhC binds a FlhD dimer, forming a heterotrimer, and a hexamer assembles by dimerization of two heterotrimers.

It is found in the cytoplasm. Its function is as follows. Functions in complex with FlhC as a master transcriptional regulator that regulates transcription of several flagellar and non-flagellar operons by binding to their promoter region. Activates expression of class 2 flagellar genes, including fliA, which is a flagellum-specific sigma factor that turns on the class 3 genes. Also regulates genes whose products function in a variety of physiological pathways. This Pectobacterium carotovorum (Erwinia carotovora) protein is Flagellar transcriptional regulator FlhD.